Reading from the N-terminus, the 300-residue chain is MYNEGVTSPSQLARKKNATDKWHGSSIRKILENPHYTGTLQQCREYRPSVTSKRRRSVNLENQIIIEKSHEPIIPLEDFLIVQEILITRKRRRPQAEVHLFTNTAVCKDCRRSMHFKKNRKGYVCGSYNKHGLKACSDHYVSEIDLTDKVITNLNKIYLKFSKENYFKELSEKALKYKEKIESKIIEINEKLNDKKRDKSNLVISLANGVISKEDYQLAINITNEDISNFETTLHQLSKDLEFQKIEKEIIDFKKSLDKFMKEGTLTPEMLHLLVDEIEVHANGTIEINYRFREPTVPSA.

Over residues 1 to 11 (MYNEGVTSPSQ) the composition is skewed to polar residues. Residues 1–20 (MYNEGVTSPSQLARKKNATD) form a disordered region. Residues 1 to 92 (MYNEGVTSPS…QEILITRKRR (92 aa)) constitute a DNA-binding region (recombinase). Residues 162 to 249 (SKENYFKELS…DLEFQKIEKE (88 aa)) adopt a coiled-coil conformation.

This is an uncharacterized protein from Bacillus subtilis (strain 168).